The chain runs to 381 residues: MKLKIGITCYPSVGGSGVVGTELGKQLAERGHEIHFITSGLPFRLNKVYPNIYFHEVTVNQYSVFQYPPYDLALASKMAEVAQRENLDILHVHYAIPHAICAYLAKQMIGERIKIVTTLHGTDITVLGSDPSLNNLIRFGIEQSDVVTAVSHSLINETHELVKPNKDIQTVYNFIDERVYFKRDMTQLKKEYGISESEKILIHISNFRKVKRVQDVVQAFAKIVTEVDAKLLLVGDGPEFCTILQLVKNLHIEDRVLFLGKQDNVAELLAMSDLMLLLSEKESFGLVLLEAMACGVPCIGTRVGGIPEVIQHGDTGYLCEVGDTTGVADQAIQLLKDEELHRNMGERARESVYEQFRSEKIVSQYETIYYDVLRDDKNGKI.

Positions 16, 94, and 122 each coordinate (S)-malate. UDP contacts are provided by asparagine 206, glutamine 262, and glutamate 290.

Belongs to the glycosyltransferase group 1 family. Glycosyltransferase 4 subfamily. Dimer of tetramers.

The catalysed reaction is (S)-malate + UDP-N-acetyl-alpha-D-glucosamine = (S)-malyl N-acetyl-alpha-D-glucosaminide + UDP + H(+). Its function is as follows. Involved in bacillithiol (BSH) biosynthesis. Catalyzes the first step of the pathway, the formation of N-acetylglucosaminylmalate (GlcNAc-Mal) from UDP-N-acetylglucosamine (UDP-GlcNAc) and L-malate. This chain is N-acetyl-alpha-D-glucosaminyl L-malate synthase, found in Bacillus anthracis.